A 423-amino-acid chain; its full sequence is Histidine--tRNA ligase (423 aa).

Belongs to the class-II aminoacyl-tRNA synthetase family. As to quaternary structure, homodimer.

It localises to the cytoplasm. It carries out the reaction tRNA(His) + L-histidine + ATP = L-histidyl-tRNA(His) + AMP + diphosphate + H(+). This Shewanella loihica (strain ATCC BAA-1088 / PV-4) protein is Histidine--tRNA ligase.